A 440-amino-acid polypeptide reads, in one-letter code: D-serine dehydratase (440 aa).

An N6-(pyridoxal phosphate)lysine modification is found at lysine 116.

The protein belongs to the serine/threonine dehydratase family. DsdA subfamily. In terms of assembly, monomer. It depends on pyridoxal 5'-phosphate as a cofactor.

It catalyses the reaction D-serine = pyruvate + NH4(+). This is D-serine dehydratase from Salmonella typhi.